The primary structure comprises 111 residues: Thiosulfate sulfurtransferase GlpE (111 aa).

One can recognise a Rhodanese domain in the interval 16–104 (QTENAVLLDV…WQRAGLPMET (89 aa)). Cys64 serves as the catalytic Cysteine persulfide intermediate.

The protein belongs to the GlpE family.

It is found in the cytoplasm. It catalyses the reaction thiosulfate + hydrogen cyanide = thiocyanate + sulfite + 2 H(+). The enzyme catalyses thiosulfate + [thioredoxin]-dithiol = [thioredoxin]-disulfide + hydrogen sulfide + sulfite + 2 H(+). Its function is as follows. Transferase that catalyzes the transfer of sulfur from thiosulfate to thiophilic acceptors such as cyanide or dithiols. May function in a CysM-independent thiosulfate assimilation pathway by catalyzing the conversion of thiosulfate to sulfite, which can then be used for L-cysteine biosynthesis. In Actinobacillus succinogenes (strain ATCC 55618 / DSM 22257 / CCUG 43843 / 130Z), this protein is Thiosulfate sulfurtransferase GlpE.